The sequence spans 389 residues: uncharacterized protein (389 aa).

3 WD repeats span residues 11–53 (SFGS…QKIK), 146–186 (SHHD…EEDA), and 289–330 (AHGD…LDIP). Position 351 is a phosphoserine (Ser351). Residues 361 to 389 (QKESVSTRPRKEKHKKAKKHSMKSRFKPY) form a disordered region. Residues 368–389 (RPRKEKHKKAKKHSMKSRFKPY) show a composition bias toward basic residues.

This is an uncharacterized protein from Saccharomyces cerevisiae (strain ATCC 204508 / S288c) (Baker's yeast).